Reading from the N-terminus, the 310-residue chain is tRNA dimethylallyltransferase (310 aa).

14–21 (GPTASGKT) lines the ATP pocket. 16 to 21 (TASGKT) is a substrate binding site. Residues 39–42 (DSMQ) form an interaction with substrate tRNA region.

This sequence belongs to the IPP transferase family. As to quaternary structure, monomer. The cofactor is Mg(2+).

The catalysed reaction is adenosine(37) in tRNA + dimethylallyl diphosphate = N(6)-dimethylallyladenosine(37) in tRNA + diphosphate. Functionally, catalyzes the transfer of a dimethylallyl group onto the adenine at position 37 in tRNAs that read codons beginning with uridine, leading to the formation of N6-(dimethylallyl)adenosine (i(6)A). This is tRNA dimethylallyltransferase from Corynebacterium jeikeium (strain K411).